Consider the following 197-residue polypeptide: Large ribosomal subunit protein bL25 (197 aa).

This sequence belongs to the bacterial ribosomal protein bL25 family. CTC subfamily. Part of the 50S ribosomal subunit; part of the 5S rRNA/L5/L18/L25 subcomplex. Contacts the 5S rRNA. Binds to the 5S rRNA independently of L5 and L18.

In terms of biological role, this is one of the proteins that binds to the 5S RNA in the ribosome where it forms part of the central protuberance. The protein is Large ribosomal subunit protein bL25 of Caulobacter vibrioides (strain ATCC 19089 / CIP 103742 / CB 15) (Caulobacter crescentus).